The chain runs to 1338 residues: MWQFIRSRILTVIIFIGAAHGLLVVGPKFIRANQEYTLVISNFNSQLSKVDLLLKLEGETDNGLSVLNVTKMVDVRRNMNRMINFNMPEDLTAGNYKITIDGQRGFSFHKEAELVYLSKSISGLIQVDKPVFKPGDTVNFRVIVLDTELKPPARVKSVHVTIRDPQRNVIRKWSTAKLYAGVFESDLQIAPTPMLGVWNISVEVEGEELVSKTFEVKEYVLSTFDVQVMPSVIPLEEHQAVNLTIEANYHFGKPVQGVAKVELYLDDDKLNQKKELTVYGKGQVELRFDNFAMDADQQDVRVKVSFIEQYTNRTVVKQSQITVYRYAYRVELIKESPQFRPGLPFKCALQFTHHDGTPAKGITGKVEVSDVGFETTKTSDNDGLIKLELQPSEGSEQLGINFNAVDGFFFYEDVNKVETVTDAYIKLELKSPIKRNKLMRFMVTCTERMTFFVYYVMSKGNIIDAGFMRPNKQTKYLLQLNATEKMIPKAKILIATVAGRTVVYDYADLDFQELRNNFDLSIDEQEIKPGRQIELSMSGRPGAYVGLAAYDKALLLFNKNHDLFWEDIGQVFDGFHAINENEFDIFHSLGLFARTLDDILFDSANEKTGRNALQSGKPIGKLVSYRTNFQESWLWKNVSIGRSGSRKLIEVVPDTTTSWYLTGFSIDPVYGLGIIKKPIQFTTVQPFYIVENLPYSIKRGEAVVLQFTLFNNLGAEYIADVTLYNVANQTEFVGRPDTDLSYTKSVSVPPKVGVPISFLIKARKLGEMAVRVKASIMLGHETDALEKVIRVMPESLAQPKMDTSFFCFDDYKNQTFPFNLDINKKADNGSKKIEFRLNPNLLTMVIKNLDNLLAVPTGCGEQNMVKFVPNILVLDYLYATGSKEQHLIDKATNLLRQGYQNQMRYRQTDGSFGVWEKSGSSVFLTAFVATSMQTASKYMNDIDAAMVEKALDWLASKQHSSGRFDETGKVWHKDMQGGLRNGVALTSYVLTALLENDIAKVKHAVVIQNGMNYLSNQLAFINNAYDLSIATYAMMLNGHTMKKEALDKLIDMSISDNNKKERYWGTTNQIETTAYALLSFVMAEKYLDGIPIMNWLVNQRYVTGSFPRTQDTFVGLKALTKLAEKISPSRNDYTVQLKYKKSTKYFNINSEQIDFQNFLEIPEDTKKLEINVGGIGFGLLEVIYQFDLNLVNFEHRFKLDLEKQNTGSDYELRLRVCANYIPELTDSQSNMALIEVTLPSGYVVDRNPISEQTTVNPIQNMEIRYGGTSVVLYYYNMGTERNCFTVTAYRRFKVALKRPAYVVVYDYYNTNLNAIKVYEVDKQNVCEICEEEDCPAEC.

Residues methionine 1–glycine 21 form the signal peptide. Residues asparagine 68, asparagine 199, asparagine 242, asparagine 312, and asparagine 481 are each glycosylated (N-linked (GlcNAc...) asparagine). Residues glutamate 580–glycine 609 are may contain the cleavage site. Asparagine 637, asparagine 728, asparagine 813, and asparagine 828 each carry an N-linked (GlcNAc...) asparagine glycan. The isoglutamyl cysteine thioester (Cys-Gln) cross-link spans cysteine 859–glutamine 862. 3 disulfide bridges follow: cysteine 1217–cysteine 1283, cysteine 1326–cysteine 1338, and cysteine 1329–cysteine 1334.

In terms of assembly, heterodimer of a TEP1-N chain and an TEP1-C chain non-covalently linked. Forms a complex composed of TEP1-N and TEP1-C heterodimer, LRIM1 and APL1C; the interaction stabilizes TEP1-N and TEP1-C heterodimer, prevents its binding to tissues while circulating in the hemolymph and protects the thioester bond from hydrolysis. Mature TEP1 and to a lesser extent full-length TEP1 interact with SPCLIP1; the interaction is induced by microbial infection. In terms of processing, in the hemolymph, the full-length protein is cleaved by an unknow protease into a 75kDa N-terminal (TEP1-N) chain and an 80kDa C-terminal (TEP1-C) chain which remain non-covalently linked. The TEP1-C chain contains the thioester bond which covalently binds to the pathogen surface. Cleavage is induced by bacterial infection or aseptic wound injury. During embryonic and pupal development, the cleaved form is the predominant form. N-glycosylated.

It localises to the secreted. Plays an essential role in the innate immune response against bacteria, fungi and protozoa infection. After proteolytic cleavage, the protein C-terminus binds covalently through a thioester bond to the pathogen surface resulting in pathogen clearance either by melanization or lysis. Initiate the recruitment and activation of a cascade of proteases, mostly of CLIP-domain serine proteases, which leads to the proteolytic cleavage of the prophenoloxidase (PPO) into active phenoloxidase (PO), the rate-limiting enzyme in melanin biosynthesis. In response to parasite P.berghei-mediated infection, binds to and mediates killing of ookinetes, as they egress from midgut epithelial cells into the basal labyrinth, by both lysis and melanization. During bacterial infection, binds to both Gram-positive and Gram-negative bacteria but only promotes phagocytosis of Gram-negative bacteria. Promotes the accumulation of SPCLIP1 onto the surface of P.berghei ookinetes and bacterium E.coli which leads to the melanization of the pathogen. Recruits CLIPA2 to bacteria surface. In response to bacterial infection, required for periostial hemocyte aggregation, but not for the aggregation of sessile hemocytes in non-periostial regions. During the late stage of fungus B.bassiana-mediated infection, required for the initiation of hyphae melanization by binding to the surface of hyphae and recruiting prophenoloxidase PPO to them. Plays a role in male fertility by binding to defective sperm cells and promoting their removal during spermatogenesis. Functionally, binds to and mediates killing of parasite P.bergei ookinetes by lysis. In terms of biological role, binds covalently through a thioester bond to the pathogen surface resulting in pathogen clearance. This Anopheles gambiae (African malaria mosquito) protein is Thioester-containing protein 1 allele S3.